Here is a 360-residue protein sequence, read N- to C-terminus: Nicotinate-nucleotide--dimethylbenzimidazole phosphoribosyltransferase (360 aa).

The active-site Proton acceptor is the Glu327.

Belongs to the CobT family.

The catalysed reaction is 5,6-dimethylbenzimidazole + nicotinate beta-D-ribonucleotide = alpha-ribazole 5'-phosphate + nicotinate + H(+). It participates in nucleoside biosynthesis; alpha-ribazole biosynthesis; alpha-ribazole from 5,6-dimethylbenzimidazole: step 1/2. Its function is as follows. Catalyzes the synthesis of alpha-ribazole-5'-phosphate from nicotinate mononucleotide (NAMN) and 5,6-dimethylbenzimidazole (DMB). The polypeptide is Nicotinate-nucleotide--dimethylbenzimidazole phosphoribosyltransferase (Shewanella baltica (strain OS223)).